The sequence spans 360 residues: Peptide chain release factor 1 (360 aa).

Gln237 is modified (N5-methylglutamine).

It belongs to the prokaryotic/mitochondrial release factor family. In terms of processing, methylated by PrmC. Methylation increases the termination efficiency of RF1.

The protein localises to the cytoplasm. Peptide chain release factor 1 directs the termination of translation in response to the peptide chain termination codons UAG and UAA. This chain is Peptide chain release factor 1 (prfA), found in Pseudomonas aeruginosa (strain ATCC 15692 / DSM 22644 / CIP 104116 / JCM 14847 / LMG 12228 / 1C / PRS 101 / PAO1).